A 143-amino-acid polypeptide reads, in one-letter code: Transcription antitermination protein NusB (143 aa).

This sequence belongs to the NusB family.

In terms of biological role, involved in transcription antitermination. Required for transcription of ribosomal RNA (rRNA) genes. Binds specifically to the boxA antiterminator sequence of the ribosomal RNA (rrn) operons. The sequence is that of Transcription antitermination protein NusB from Streptomyces griseus subsp. griseus (strain JCM 4626 / CBS 651.72 / NBRC 13350 / KCC S-0626 / ISP 5235).